Consider the following 178-residue polypeptide: Cysteine-rich venom protein VAR3 (178 aa).

Residues 1-22 form the signal peptide; it reads MILLKLYLTLAAILCQSRGTTS. In terms of domain architecture, SCP spans 41–169; the sequence is NKHNDLRRTV…PLKYFLVCQY (129 aa). 3 cysteine pairs are disulfide-bonded: C77–C156, C95–C170, and C151–C167.

Belongs to the CRISP family. In terms of processing, contains 8 disulfide bonds. Expressed by the venom gland.

Its subcellular location is the secreted. Functionally, blocks ryanodine receptors, and potassium channels. The chain is Cysteine-rich venom protein VAR3 from Varanus acanthurus (Ridge-tailed monitor).